The sequence spans 425 residues: tRNA(Ile)-lysidine synthase (425 aa).

27–32 provides a ligand contact to ATP; sequence SGGLDS.

Belongs to the tRNA(Ile)-lysidine synthase family.

Its subcellular location is the cytoplasm. It catalyses the reaction cytidine(34) in tRNA(Ile2) + L-lysine + ATP = lysidine(34) in tRNA(Ile2) + AMP + diphosphate + H(+). In terms of biological role, ligates lysine onto the cytidine present at position 34 of the AUA codon-specific tRNA(Ile) that contains the anticodon CAU, in an ATP-dependent manner. Cytidine is converted to lysidine, thus changing the amino acid specificity of the tRNA from methionine to isoleucine. This is tRNA(Ile)-lysidine synthase from Streptococcus pneumoniae serotype 19F (strain G54).